A 204-amino-acid polypeptide reads, in one-letter code: U1 small nuclear ribonucleoprotein C (204 aa).

The Matrin-type zinc finger occupies 4 to 36 (FFCDYCDVYLTHDSMSVRKAHNSGRNHLRNVVD). The interval 65 to 204 (ANPMLPQNQP…GAGAPGHEKR (140 aa)) is disordered. 2 stretches are compositionally biased toward pro residues: residues 77–154 (GFPP…PGAP) and 166–192 (APPP…PGFA).

Belongs to the U1 small nuclear ribonucleoprotein C family. In terms of assembly, U1 snRNP is composed of the 7 core Sm proteins B/B', D1, D2, D3, E, F and G that assemble in a heptameric protein ring on the Sm site of the small nuclear RNA to form the core snRNP, and at least 3 U1 snRNP-specific proteins U1-70K, U1-A and U1-C. U1-C interacts with U1 snRNA and the 5' splice-site region of the pre-mRNA.

The protein resides in the nucleus. Functionally, component of the spliceosomal U1 snRNP, which is essential for recognition of the pre-mRNA 5' splice-site and the subsequent assembly of the spliceosome. U1-C is directly involved in initial 5' splice-site recognition for both constitutive and regulated alternative splicing. The interaction with the 5' splice-site seems to precede base-pairing between the pre-mRNA and the U1 snRNA. Stimulates commitment or early (E) complex formation by stabilizing the base pairing of the 5' end of the U1 snRNA and the 5' splice-site region. The sequence is that of U1 small nuclear ribonucleoprotein C from Fusarium vanettenii (strain ATCC MYA-4622 / CBS 123669 / FGSC 9596 / NRRL 45880 / 77-13-4) (Fusarium solani subsp. pisi).